Here is a 190-residue protein sequence, read N- to C-terminus: Guanylate kinase (190 aa).

Residues 3–185 (NYIFIVSAPS…SLEQFCKYFE (183 aa)) form the Guanylate kinase-like domain. 10 to 17 (APSGAGKS) contributes to the ATP binding site.

The protein belongs to the guanylate kinase family.

It localises to the cytoplasm. It catalyses the reaction GMP + ATP = GDP + ADP. Essential for recycling GMP and indirectly, cGMP. The polypeptide is Guanylate kinase (Francisella tularensis subsp. tularensis (strain FSC 198)).